The following is a 190-amino-acid chain: ATP synthase subunit delta (190 aa).

Belongs to the ATPase delta chain family. In terms of assembly, F-type ATPases have 2 components, F(1) - the catalytic core - and F(0) - the membrane proton channel. F(1) has five subunits: alpha(3), beta(3), gamma(1), delta(1), epsilon(1). F(0) has three main subunits: a(1), b(2) and c(10-14). The alpha and beta chains form an alternating ring which encloses part of the gamma chain. F(1) is attached to F(0) by a central stalk formed by the gamma and epsilon chains, while a peripheral stalk is formed by the delta and b chains.

The protein localises to the cell inner membrane. Functionally, f(1)F(0) ATP synthase produces ATP from ADP in the presence of a proton or sodium gradient. F-type ATPases consist of two structural domains, F(1) containing the extramembraneous catalytic core and F(0) containing the membrane proton channel, linked together by a central stalk and a peripheral stalk. During catalysis, ATP synthesis in the catalytic domain of F(1) is coupled via a rotary mechanism of the central stalk subunits to proton translocation. In terms of biological role, this protein is part of the stalk that links CF(0) to CF(1). It either transmits conformational changes from CF(0) to CF(1) or is implicated in proton conduction. The protein is ATP synthase subunit delta of Methylobacterium sp. (strain 4-46).